The chain runs to 695 residues: Translation initiation factor IF-2 (695 aa).

Positions 60-92 are disordered; sequence KKSASSKKKTEKEVEEEEIETPKKKKKQEEKIP. In terms of domain architecture, tr-type G spans 184–358; that stretch reads QRPPVVTVMG…EMSEIKCIPT (175 aa). The G1 stretch occupies residues 193–200; it reads GHVDHGKT. 193–200 serves as a coordination point for GTP; sequence GHVDHGKT. The segment at 218-222 is G2; that stretch reads GITQS. The tract at residues 239–242 is G3; sequence DTPG. GTP is bound by residues 239-243 and 293-296; these read DTPGH and NKID. Residues 293-296 are G4; it reads NKID. Residues 330–332 are G5; sequence SAK.

The protein belongs to the TRAFAC class translation factor GTPase superfamily. Classic translation factor GTPase family. IF-2 subfamily.

It is found in the cytoplasm. Functionally, one of the essential components for the initiation of protein synthesis. Protects formylmethionyl-tRNA from spontaneous hydrolysis and promotes its binding to the 30S ribosomal subunits. Also involved in the hydrolysis of GTP during the formation of the 70S ribosomal complex. This chain is Translation initiation factor IF-2, found in Kosmotoga olearia (strain ATCC BAA-1733 / DSM 21960 / TBF 19.5.1).